The primary structure comprises 509 residues: Sulfoacetate--CoA ligase (509 aa).

The interval 320-340 (AFSNPLDPGQRRIGSIGRPSG) is disordered.

The protein belongs to the ATP-dependent AMP-binding enzyme family.

Its subcellular location is the cytoplasm. It carries out the reaction sulfoacetate + ATP + CoA = sulfoacetyl-CoA + AMP + diphosphate. Functionally, involved in the degradation of sulfoacetate, a widespread natural product. Catalyzes the CoA- and ATP-dependent conversion of sulfoacetate to sulfoacetyl-CoA and AMP. This Cupriavidus necator (strain ATCC 17699 / DSM 428 / KCTC 22496 / NCIMB 10442 / H16 / Stanier 337) (Ralstonia eutropha) protein is Sulfoacetate--CoA ligase.